A 299-amino-acid chain; its full sequence is Oxygen-dependent coproporphyrinogen-III oxidase (299 aa).

S92 is a binding site for substrate. Residues H96 and H106 each contribute to the a divalent metal cation site. H106 serves as the catalytic Proton donor. 108–110 (NVR) contributes to the substrate binding site. A divalent metal cation is bound by residues H145 and H175. Residues 239-274 (YVEFNLVYDRGTLFGLQSGGRAESILMSLPPRVRWE) are important for dimerization. 257 to 259 (GGR) contributes to the substrate binding site.

This sequence belongs to the aerobic coproporphyrinogen-III oxidase family. As to quaternary structure, homodimer. It depends on a divalent metal cation as a cofactor.

It localises to the cytoplasm. The enzyme catalyses coproporphyrinogen III + O2 + 2 H(+) = protoporphyrinogen IX + 2 CO2 + 2 H2O. The protein operates within porphyrin-containing compound metabolism; protoporphyrin-IX biosynthesis; protoporphyrinogen-IX from coproporphyrinogen-III (O2 route): step 1/1. Functionally, involved in the heme biosynthesis. Catalyzes the aerobic oxidative decarboxylation of propionate groups of rings A and B of coproporphyrinogen-III to yield the vinyl groups in protoporphyrinogen-IX. This chain is Oxygen-dependent coproporphyrinogen-III oxidase, found in Xanthomonas axonopodis pv. citri (strain 306).